The primary structure comprises 257 residues: RING1 and YY1-binding protein B (257 aa).

2 disordered regions span residues 1-24 and 45-257; these read MGDK…GFWD and RKGT…DESF. The RanBP2-type zinc-finger motif lies at 19–48; that stretch reads DNGFWDCSVCTFRNSAEAFKCSICDVRKGT. Positions 74 to 129 are enriched in basic and acidic residues; that stretch reads PKKEKKEKPERPEKDRAEEERPDINPPDEHPVEQRDKDKSEKEQPEKEKKDREKEI. Residues 149–168 show a composition bias toward polar residues; the sequence is HQSPPSERNSIQSGKSTTKT. A compositionally biased stretch (basic residues) spans 169–178; sequence KNSHNSRPKL. Over residues 209–233 the composition is skewed to low complexity; sequence TSSTSSSTVTSSASSEQQHQSSGSE.

The protein localises to the nucleus. It is found in the cytoplasm. Functionally, may be implicated in the regulation of the transcription as a repressor of the transcriptional activity of E4TF1. This chain is RING1 and YY1-binding protein B (rybpb), found in Danio rerio (Zebrafish).